A 722-amino-acid polypeptide reads, in one-letter code: Polyribonucleotide nucleotidyltransferase (722 aa).

Mg(2+)-binding residues include D487 and D493. The KH domain maps to 554–613 (PRMVSFKIHPDKIREVIGKGGATIQALTKETGCSIDIKDDGTVTIASTSAEGMAEAKARI). The S1 motif domain maps to 623-691 (GKIYEGPVVK…ERGRLRLSLK (69 aa)).

This sequence belongs to the polyribonucleotide nucleotidyltransferase family. It depends on Mg(2+) as a cofactor.

The protein localises to the cytoplasm. The catalysed reaction is RNA(n+1) + phosphate = RNA(n) + a ribonucleoside 5'-diphosphate. Functionally, involved in mRNA degradation. Catalyzes the phosphorolysis of single-stranded polyribonucleotides processively in the 3'- to 5'-direction. This is Polyribonucleotide nucleotidyltransferase from Polynucleobacter necessarius subsp. necessarius (strain STIR1).